Here is a 175-residue protein sequence, read N- to C-terminus: Large ribosomal subunit protein uL10 (175 aa).

It belongs to the universal ribosomal protein uL10 family. Part of the ribosomal stalk of the 50S ribosomal subunit. The N-terminus interacts with L11 and the large rRNA to form the base of the stalk. The C-terminus forms an elongated spine to which L12 dimers bind in a sequential fashion forming a multimeric L10(L12)X complex.

Forms part of the ribosomal stalk, playing a central role in the interaction of the ribosome with GTP-bound translation factors. This chain is Large ribosomal subunit protein uL10, found in Mycobacterium sp. (strain JLS).